A 313-amino-acid polypeptide reads, in one-letter code: D-beta-D-heptose 7-phosphate kinase (313 aa).

196-199 is a binding site for ATP; that stretch reads NRAE. Asp-264 is an active-site residue.

The enzyme catalyses D-glycero-beta-D-manno-heptose 7-phosphate + ATP = D-glycero-beta-D-manno-heptose 1,7-bisphosphate + ADP + H(+). The protein operates within nucleotide-sugar biosynthesis; ADP-L-glycero-beta-D-manno-heptose biosynthesis; ADP-L-glycero-beta-D-manno-heptose from D-glycero-beta-D-manno-heptose 7-phosphate: step 1/4. It participates in bacterial outer membrane biogenesis; LPS core biosynthesis. Catalyzes the phosphorylation of D-glycero-D-manno-heptose 7-phosphate at the C-1 position to selectively form D-glycero-beta-D-manno-heptose-1,7-bisphosphate. This is D-beta-D-heptose 7-phosphate kinase (rfaE) from Bordetella bronchiseptica (strain ATCC BAA-588 / NCTC 13252 / RB50) (Alcaligenes bronchisepticus).